A 395-amino-acid chain; its full sequence is S-adenosylmethionine synthase (395 aa).

H12 provides a ligand contact to ATP. D14 is a Mg(2+) binding site. K(+) is bound at residue E40. L-methionine-binding residues include E53 and Q96. The interval 96-106 (QSKEIADAVNF) is flexible loop. ATP is bound by residues 174 to 176 (DGK), 242 to 243 (RF), D251, 257 to 258 (RK), A274, and K278. An L-methionine-binding site is contributed by D251. K282 is a binding site for L-methionine.

The protein belongs to the AdoMet synthase family. As to quaternary structure, homotetramer; dimer of dimers. Requires Mg(2+) as cofactor. It depends on K(+) as a cofactor.

It is found in the cytoplasm. It carries out the reaction L-methionine + ATP + H2O = S-adenosyl-L-methionine + phosphate + diphosphate. It participates in amino-acid biosynthesis; S-adenosyl-L-methionine biosynthesis; S-adenosyl-L-methionine from L-methionine: step 1/1. Functionally, catalyzes the formation of S-adenosylmethionine (AdoMet) from methionine and ATP. The overall synthetic reaction is composed of two sequential steps, AdoMet formation and the subsequent tripolyphosphate hydrolysis which occurs prior to release of AdoMet from the enzyme. The chain is S-adenosylmethionine synthase from Tropheryma whipplei (strain TW08/27) (Whipple's bacillus).